The primary structure comprises 145 residues: 5-hydroxymethyl-dUMP N-hydrolase (145 aa).

Residues glycine 7, isoleucine 9, arginine 10, glycine 11, serine 79, glycine 81, glutamate 85, and serine 109 each contribute to the 5-hydroxymethyl-dUMP site.

This sequence belongs to the 2'-deoxynucleoside 5'-phosphate N-hydrolase 1 family. Monomer and homodimer.

It is found in the cytoplasm. Its subcellular location is the nucleus. It catalyses the reaction 5-hydroxymethyl-dUMP + H2O = 5-hydroxymethyluracil + 2-deoxy-D-ribose 5-phosphate. Part of a nucleotide salvage pathway that eliminates epigenetically modified 5-hydroxymethyl-dCMP (hmdCMP) in a two-step process entailing deamination to cytotoxic 5-hydroxymethyl-dUMP (hmdUMP), followed by its hydrolysis into 5-hydroxymethyluracil (hmU) and 2-deoxy-D-ribose 5-phosphate (deoxyribosephosphate). Catalyzes the second step in that pathway, the hydrolysis of the N-glycosidic bond in hmdUMP, degrading this cytotoxic nucleotide to avoid its genomic integration. This is 5-hydroxymethyl-dUMP N-hydrolase from Esox lucius (Northern pike).